The primary structure comprises 247 residues: Ubiquinone biosynthesis O-methyltransferase (247 aa).

S-adenosyl-L-methionine contacts are provided by R39, G70, D91, and M134.

The protein belongs to the methyltransferase superfamily. UbiG/COQ3 family.

It catalyses the reaction a 3-demethylubiquinol + S-adenosyl-L-methionine = a ubiquinol + S-adenosyl-L-homocysteine + H(+). The catalysed reaction is a 3-(all-trans-polyprenyl)benzene-1,2-diol + S-adenosyl-L-methionine = a 2-methoxy-6-(all-trans-polyprenyl)phenol + S-adenosyl-L-homocysteine + H(+). It participates in cofactor biosynthesis; ubiquinone biosynthesis. Functionally, O-methyltransferase that catalyzes the 2 O-methylation steps in the ubiquinone biosynthetic pathway. This is Ubiquinone biosynthesis O-methyltransferase from Cereibacter sphaeroides (strain ATCC 17025 / ATH 2.4.3) (Rhodobacter sphaeroides).